The primary structure comprises 206 residues: Lipid A acyltransferase PagP (206 aa).

A signal peptide spans 1–22 (MKQMVCWLTAGLLTLGGLPARA). Positions 26–46 (VPAVPETPAAPAAPAVQETPA) are enriched in low complexity. A disordered region spans residues 26-50 (VPAVPETPAAPAAPAVQETPASSAA). Catalysis depends on residues H80, D123, and S124.

The protein belongs to the lipid A palmitoyltransferase family. As to quaternary structure, homodimer.

The protein localises to the cell outer membrane. It carries out the reaction a lipid A + a 1,2-diacyl-sn-glycero-3-phosphocholine = a hepta-acyl lipid A + a 2-acyl-sn-glycero-3-phosphocholine. The catalysed reaction is a lipid IVA + a 1,2-diacyl-sn-glycero-3-phosphocholine = a lipid IVB + a 2-acyl-sn-glycero-3-phosphocholine. It catalyses the reaction a lipid IIA + a 1,2-diacyl-sn-glycero-3-phosphocholine = a lipid IIB + a 2-acyl-sn-glycero-3-phosphocholine. In terms of biological role, transfers a fatty acid residue from the sn-1 position of a phospholipid to the N-linked hydroxyfatty acid chain on the proximal unit of lipid A or its precursors. This is Lipid A acyltransferase PagP from Laribacter hongkongensis (strain HLHK9).